The following is a 385-amino-acid chain: Putative non-inhibitory serpin-Z11 (385 aa).

The segment at 324–348 (GTTAVEAMYSPSSPGYSPGYQPPRP) is RCL.

The protein belongs to the serpin family.

The sequence is that of Putative non-inhibitory serpin-Z11 from Oryza sativa subsp. japonica (Rice).